We begin with the raw amino-acid sequence, 310 residues long: Porphobilinogen deaminase (310 aa).

C236 is modified (S-(dipyrrolylmethanemethyl)cysteine).

This sequence belongs to the HMBS family. In terms of assembly, monomer. It depends on dipyrromethane as a cofactor.

The catalysed reaction is 4 porphobilinogen + H2O = hydroxymethylbilane + 4 NH4(+). It functions in the pathway porphyrin-containing compound metabolism; protoporphyrin-IX biosynthesis; coproporphyrinogen-III from 5-aminolevulinate: step 2/4. Functionally, tetrapolymerization of the monopyrrole PBG into the hydroxymethylbilane pre-uroporphyrinogen in several discrete steps. This Nitratiruptor sp. (strain SB155-2) protein is Porphobilinogen deaminase.